The primary structure comprises 355 residues: MGSLVRLLKELYVPGKDICISPRGVYTILMNIMIGCKKETRDKIKDLLGIFGNYVPIPDKSEYYVEYYDDKDELINKSIMLIEEGYPIKRDFINSSYDIFNAKVVSFTDDTISETINKWVELSTRGLIKDFSISLADDIRLAIINVLYFKSKWKYPFDTELTSKHPFKKYNGTDVMIDTMMIQDVAFYYKHDEDIRSQVVMLEYEDYRFVMFIIIPDSVTGIDGVVDSLNNGKNINKIISKKDMTLKEIVLYLPKFELEDDVDLKDALIHMGCNDLFKSGELVGISDTKTLRIGNIRQKSVIKVDEYGTEAASVTESCTTDGIKKIPIVKANVPFMFLVADVQTKIPLFLGIFQG.

The protein belongs to the serpin family. Poxviruses subfamily.

This is an uncharacterized protein from Vertebrata (FPV).